A 147-amino-acid polypeptide reads, in one-letter code: Phospholipase A2 SSD387 (147 aa).

Positions 1–19 are cleaved as a signal peptide; sequence MSPKFLLFSIIAVWSCAAA. Residues 20-28 constitute a propeptide that is removed on maturation; it reads IEALFIQPR. 5 disulfides stabilise this stretch: Cys-55/Cys-71, Cys-70/Cys-130, Cys-77/Cys-123, Cys-86/Cys-116, and Cys-109/Cys-121. Residues Gly-56 and Gly-58 each contribute to the Ca(2+) site. His-74 is an active-site residue. A Ca(2+)-binding site is contributed by Asp-75. Residue Asp-124 is part of the active site.

It depends on Ca(2+) as a cofactor. Expressed by the venom gland.

The protein resides in the secreted. The enzyme catalyses a 1,2-diacyl-sn-glycero-3-phosphocholine + H2O = a 1-acyl-sn-glycero-3-phosphocholine + a fatty acid + H(+). In terms of biological role, PLA2 catalyzes the calcium-dependent hydrolysis of the 2-acyl groups in 3-sn-phosphoglycerides. The chain is Phospholipase A2 SSD387 from Scolopendra dehaani (Thai centipede).